We begin with the raw amino-acid sequence, 774 residues long: Fe(3+) dicitrate transport protein FecA (774 aa).

Positions 1–33 (MTPLRVFRKTTPLVNTIRLSLLPLAGLSFSAFA) are cleaved as a signal peptide. A TonB box motif is present at residues 56 to 63 (FTLSVDAS). A TBDR plug domain is found at 129 to 250 (DVFEHAGARD…VGGVVNFVTR (122 aa)). The region spanning 255 to 774 (DFGIEAGVEG…TLYMQGSLKF (520 aa)) is the TBDR beta-barrel domain. The TonB C-terminal box motif lies at 757–774 (GIYAGQPRTLYMQGSLKF).

This sequence belongs to the TonB-dependent receptor family. In terms of assembly, interacts (via periplasmic N-terminus) with FecR (via periplasmic C-terminus).

It localises to the cell outer membrane. FecA is the outer membrane receptor protein in the Fe(3+) dicitrate transport system. The chain is Fe(3+) dicitrate transport protein FecA (fecA) from Escherichia coli (strain K12).